A 461-amino-acid polypeptide reads, in one-letter code: Threonine/serine transporter ThrP (461 aa).

The next 12 helical transmembrane spans lie at 17–37, 40–60, 97–117, 123–143, 156–176, 201–221, 244–264, 278–298, 333–353, 360–380, 401–421, and 430–450; these read IELI…AAST, WAGP…FFIM, WFMW…YVQF, AQWI…LAAV, IKVT…FFGF, GFLT…LIGI, ILIF…WNEI, IGIT…ALSG, VAGV…NYII, FVYV…VILI, IMFP…LIGM, and SLFV…VFGL.

This sequence belongs to the amino acid-polyamine-organocation (APC) superfamily.

It localises to the cell inner membrane. The enzyme catalyses L-threonine(in) + H(+)(in) = L-threonine(out) + H(+)(out). It carries out the reaction L-serine(in) + H(+)(in) = L-serine(out) + H(+)(out). Functionally, permease that mediates the proton-dependent threonine and serine uptake. The protein is Threonine/serine transporter ThrP of Salmonella typhi.